We begin with the raw amino-acid sequence, 331 residues long: B-box zinc finger protein 21 (331 aa).

Zn(2+) contacts are provided by cysteine 5, cysteine 8, cysteine 28, histidine 34, cysteine 60, cysteine 63, cysteine 83, and histidine 93. Residues 5–47 (CDVCDKEEASVFCTADEASLCGGCDHQVHHANKLASKHLRFSL) form a B box-type 1; atypical zinc finger. Residues 60-102 (CDICQDKKALLFCQQDRAILCKDCDSSIHAANEHTKKHDRFLL) form a B box-type 2; atypical zinc finger. Low complexity-rich tracts occupy residues 115 to 126 (KPTSKSSSSSSS) and 228 to 238 (NNNNNNNNNNN). Disordered regions lie at residues 115-167 (KPTS…GGDA) and 209-241 (DDDG…NTVS).

Interacts with COP1, HY5 and BBX32. Interacts with FLZ1.

The protein resides in the nucleus. Functionally, transcription activator that acts as a positive regulator of seedling photomorphogenesis. Acts downstream of COP1 and play an important role in early and long-term adjustment of the shade avoidance syndrome (SAS) responses in natural environments. This chain is B-box zinc finger protein 21, found in Arabidopsis thaliana (Mouse-ear cress).